A 568-amino-acid chain; its full sequence is 2-isopropylmalate synthase (568 aa).

The region spanning 37–313 is the Pyruvate carboxyltransferase domain; the sequence is PRWLSTDLRD…DPMIDFSNID (277 aa). Mg(2+) contacts are provided by aspartate 46, histidine 252, histidine 254, and asparagine 288. The interval 455-568 is regulatory domain; sequence EGVVGVMAYR…CSAVNRAQQS (114 aa).

Belongs to the alpha-IPM synthase/homocitrate synthase family. LeuA type 2 subfamily. In terms of assembly, homodimer. Requires Mg(2+) as cofactor.

The protein resides in the cytoplasm. The catalysed reaction is 3-methyl-2-oxobutanoate + acetyl-CoA + H2O = (2S)-2-isopropylmalate + CoA + H(+). Its pathway is amino-acid biosynthesis; L-leucine biosynthesis; L-leucine from 3-methyl-2-oxobutanoate: step 1/4. Catalyzes the condensation of the acetyl group of acetyl-CoA with 3-methyl-2-oxobutanoate (2-ketoisovalerate) to form 3-carboxy-3-hydroxy-4-methylpentanoate (2-isopropylmalate). This Thermobifida fusca (strain YX) protein is 2-isopropylmalate synthase.